Consider the following 340-residue polypeptide: 4-hydroxythreonine-4-phosphate dehydrogenase (340 aa).

Substrate-binding residues include H141 and T142. A divalent metal cation-binding residues include H177, H222, and H277. Substrate contacts are provided by K285, N294, and R303.

This sequence belongs to the PdxA family. Homodimer. Zn(2+) is required as a cofactor. The cofactor is Mg(2+). Requires Co(2+) as cofactor.

The protein resides in the cytoplasm. The catalysed reaction is 4-(phosphooxy)-L-threonine + NAD(+) = 3-amino-2-oxopropyl phosphate + CO2 + NADH. It functions in the pathway cofactor biosynthesis; pyridoxine 5'-phosphate biosynthesis; pyridoxine 5'-phosphate from D-erythrose 4-phosphate: step 4/5. Functionally, catalyzes the NAD(P)-dependent oxidation of 4-(phosphooxy)-L-threonine (HTP) into 2-amino-3-oxo-4-(phosphooxy)butyric acid which spontaneously decarboxylates to form 3-amino-2-oxopropyl phosphate (AHAP). This chain is 4-hydroxythreonine-4-phosphate dehydrogenase, found in Maricaulis maris (strain MCS10) (Caulobacter maris).